A 179-amino-acid chain; its full sequence is tRNA (cytidine(56)-2'-O)-methyltransferase (179 aa).

Residues L82, 112-116, and 130-137 each bind S-adenosyl-L-methionine; these read GAEKV and VGNQPHSE.

Belongs to the aTrm56 family. As to quaternary structure, homodimer.

Its subcellular location is the cytoplasm. It carries out the reaction cytidine(56) in tRNA + S-adenosyl-L-methionine = 2'-O-methylcytidine(56) in tRNA + S-adenosyl-L-homocysteine + H(+). Its function is as follows. Specifically catalyzes the AdoMet-dependent 2'-O-ribose methylation of cytidine at position 56 in tRNAs. This Methanococcus maripaludis (strain C6 / ATCC BAA-1332) protein is tRNA (cytidine(56)-2'-O)-methyltransferase.